Consider the following 261-residue polypeptide: Pantothenate synthetase (261 aa).

29–36 (MGALHNGH) serves as a coordination point for ATP. Catalysis depends on H36, which acts as the Proton donor. A (R)-pantoate-binding site is contributed by Q60. Q60 lines the beta-alanine pocket. Position 147–150 (147–150 (GEKD)) interacts with ATP. Residue Q153 participates in (R)-pantoate binding. 184 to 187 (LSSR) is an ATP binding site.

Belongs to the pantothenate synthetase family. Homodimer.

It is found in the cytoplasm. The enzyme catalyses (R)-pantoate + beta-alanine + ATP = (R)-pantothenate + AMP + diphosphate + H(+). Its pathway is cofactor biosynthesis; (R)-pantothenate biosynthesis; (R)-pantothenate from (R)-pantoate and beta-alanine: step 1/1. Catalyzes the condensation of pantoate with beta-alanine in an ATP-dependent reaction via a pantoyl-adenylate intermediate. This Francisella philomiragia subsp. philomiragia (strain ATCC 25017 / CCUG 19701 / FSC 153 / O#319-036) protein is Pantothenate synthetase.